Consider the following 748-residue polypeptide: WD repeat-containing protein 91 (748 aa).

A coiled-coil region spans residues 183–228 (QRTNQVQEENEVLRQKLFALQAEIHRLKKEEQQQEEEAAALVQHKL). A Phosphoserine modification is found at Ser-257. Over residues 266–279 (LLPQSKKSPSRLSP) the composition is skewed to low complexity. Residues 266 to 368 (LLPQSKKSPS…PEVSGAEAEP (103 aa)) form a disordered region. The segment covering 284-300 (PQAQSSAKKDSFSSQAT) has biased composition (polar residues). Phosphoserine occurs at positions 289 and 294. The span at 333 to 344 (RLQDHGKERREL) shows a compositional bias: basic and acidic residues. Positions 345 to 354 (LSTSSSQSQC) are enriched in polar residues. 7 WD repeats span residues 407 to 446 (EHHS…QTKA), 449 to 489 (ISKS…NLCE), 512 to 556 (VCSA…QQLQ), 561 to 600 (PEPI…CAMS), 603 to 642 (AHCG…LKVS), 665 to 703 (VQVP…KVLE), and 710 to 748 (GHRA…AHKL).

It belongs to the WD repeat WDR91 family. In terms of assembly, interacts with WDR81; involved in early to late endosome cargo transport. Interacts with BECN1; negatively regulates the PI3 kinase/PI3K activity associated with endosomal membranes.

The protein localises to the early endosome membrane. Its subcellular location is the late endosome membrane. Functionally, functions as a negative regulator of the PI3 kinase/PI3K activity associated with endosomal membranes via BECN1, a core subunit of the PI3K complex. By modifying the phosphatidylinositol 3-phosphate/PtdInsP3 content of endosomal membranes may regulate endosome fusion, recycling, sorting and early to late endosome transport. It is for instance, required for the delivery of cargos like BST2/tetherin from early to late endosome and thereby participates indirectly to their degradation by the lysosome. May play a role in meiosis. In Mus musculus (Mouse), this protein is WD repeat-containing protein 91.